The sequence spans 552 residues: Urocanate hydratase (552 aa).

NAD(+) contacts are provided by residues 48 to 49 (GG), Gln-126, 172 to 174 (GMG), Glu-192, Arg-197, 238 to 239 (NA), 259 to 263 (QTSAH), 269 to 270 (YV), and Tyr-318. Cys-406 is an active-site residue. Gly-488 is an NAD(+) binding site.

This sequence belongs to the urocanase family. NAD(+) is required as a cofactor.

The protein localises to the cytoplasm. The catalysed reaction is 4-imidazolone-5-propanoate = trans-urocanate + H2O. It functions in the pathway amino-acid degradation; L-histidine degradation into L-glutamate; N-formimidoyl-L-glutamate from L-histidine: step 2/3. In terms of biological role, catalyzes the conversion of urocanate to 4-imidazolone-5-propionate. In Herpetosiphon aurantiacus (strain ATCC 23779 / DSM 785 / 114-95), this protein is Urocanate hydratase.